A 329-amino-acid chain; its full sequence is Myoblast determination protein 1 homolog (329 aa).

The bHLH domain occupies 160 to 211; sequence DRRKAATMRERRRLRKVNEAFEVVKQRTCPNPNQRLPKVEILRSAIDYINTL. The tract at residues 256–279 is disordered; that stretch reads NPDGPNVYDDEDLSDTDEDRDHHH. Over residues 263-273 the composition is skewed to acidic residues; that stretch reads YDDEDLSDTDE.

As to quaternary structure, efficient DNA binding requires dimerization with another bHLH protein. As to expression, body wall muscle cells; in clonal muscle precursors, in a set of early embryonic blastomeres (the ms-granddaughters), and in six glial-like cells called GLRS.

It is found in the nucleus. Accumulation defines the body wall muscle cell fate during embryogenesis. In Caenorhabditis briggsae, this protein is Myoblast determination protein 1 homolog (hlh-1).